The sequence spans 294 residues: ATP synthase gamma chain (294 aa).

This sequence belongs to the ATPase gamma chain family. In terms of assembly, F-type ATPases have 2 components, CF(1) - the catalytic core - and CF(0) - the membrane proton channel. CF(1) has five subunits: alpha(3), beta(3), gamma(1), delta(1), epsilon(1). CF(0) has three main subunits: a, b and c.

The protein resides in the cell inner membrane. Its function is as follows. Produces ATP from ADP in the presence of a proton gradient across the membrane. The gamma chain is believed to be important in regulating ATPase activity and the flow of protons through the CF(0) complex. The polypeptide is ATP synthase gamma chain (Campylobacter jejuni subsp. doylei (strain ATCC BAA-1458 / RM4099 / 269.97)).